Consider the following 406-residue polypeptide: Phosphopentomutase (406 aa).

Mn(2+)-binding residues include Asp-10, Asp-305, His-310, Asp-346, His-347, and His-358.

It belongs to the phosphopentomutase family. It depends on Mn(2+) as a cofactor.

It localises to the cytoplasm. The enzyme catalyses 2-deoxy-alpha-D-ribose 1-phosphate = 2-deoxy-D-ribose 5-phosphate. It carries out the reaction alpha-D-ribose 1-phosphate = D-ribose 5-phosphate. The protein operates within carbohydrate degradation; 2-deoxy-D-ribose 1-phosphate degradation; D-glyceraldehyde 3-phosphate and acetaldehyde from 2-deoxy-alpha-D-ribose 1-phosphate: step 1/2. Isomerase that catalyzes the conversion of deoxy-ribose 1-phosphate (dRib-1-P) and ribose 1-phosphate (Rib-1-P) to deoxy-ribose 5-phosphate (dRib-5-P) and ribose 5-phosphate (Rib-5-P), respectively. This is Phosphopentomutase from Vibrio parahaemolyticus serotype O3:K6 (strain RIMD 2210633).